A 344-amino-acid chain; its full sequence is Cycloartenol-C-24-methyltransferase 1 (344 aa).

It belongs to the class I-like SAM-binding methyltransferase superfamily. Erg6/SMT family.

It carries out the reaction zymosterol + S-adenosyl-L-methionine = fecosterol + S-adenosyl-L-homocysteine + H(+). It participates in steroid biosynthesis; sterol biosynthesis. Catalyzes the methyl transfer from S-adenosyl-methionine to the C-24 of cycloartenol to form 24-methylene cycloartenol. The chain is Cycloartenol-C-24-methyltransferase 1 (Smt1-1) from Oryza sativa subsp. japonica (Rice).